The sequence spans 924 residues: Exocyst complex component 2 (924 aa).

One can recognise an IPT/TIG domain in the interval 8–93 (PLVTGISPNE…GTSTVSFKLL (86 aa)). A coiled-coil region spans residues 240–260 (QKLENVLNRASNTADTLFQEV). A phosphoserine mark is found at Ser-431, Ser-432, and Ser-435. Thr-440 is subject to Phosphothreonine. Residue Lys-454 is modified to N6-acetyllysine. Residue Ser-888 is modified to Phosphoserine.

It belongs to the SEC5 family. As to quaternary structure, the exocyst complex is composed of EXOC1, EXOC2, EXOC3, EXOC4, EXOC5, EXOC6, EXOC7 and EXOC8. Interacts with EXOC3L1. Interacts with GNEFR/DELGEF; this interaction occurs only in the presence of magnesium or manganese and is stimulated by dCTP or GTP. Interacts with RALA and RALB. Interacts with ARL13B; regulates ARL13B localization to the cilium membrane. In terms of tissue distribution, widely expressed with highest levels in brain and placenta.

The protein localises to the midbody. Its subcellular location is the midbody ring. In terms of biological role, component of the exocyst complex involved in the docking of exocytic vesicles with fusion sites on the plasma membrane. The polypeptide is Exocyst complex component 2 (EXOC2) (Homo sapiens (Human)).